The following is a 127-amino-acid chain: Egg cell-secreted protein 1.4 (127 aa).

The first 25 residues, 1 to 25, serve as a signal peptide directing secretion; that stretch reads MASNTTFLFSTVTLLIILLNTTVSG.

Belongs to the plant egg cell-secreted peptide family. Restricted to female reproductive tissues, specifically accumulating in storage vesicles of the unfertilized egg cell.

It localises to the cytoplasmic vesicle. The protein localises to the secreted. In terms of biological role, involved in the regulation of gamete interactions during the double fertilization and to prevent multiple-pollen tube attraction; mediates the redistribution of the gamete fusogen HAP2/GCS1 to the cell surface after secretion upon sperm arrival. In Arabidopsis thaliana (Mouse-ear cress), this protein is Egg cell-secreted protein 1.4 (EC1.4).